The chain runs to 45 residues: Large ribosomal subunit protein bL34c (45 aa).

A compositionally biased stretch (polar residues) spans 1 to 10 (MSKGFSNGTN). A disordered region spans residues 1–45 (MSKGFSNGTNIKRVRKSGFRARMSNSSGRKILNSRRRKQRKKIAL). Residues 32-45 (LNSRRRKQRKKIAL) are compositionally biased toward basic residues.

Belongs to the bacterial ribosomal protein bL34 family.

The protein localises to the plastid. Its subcellular location is the chloroplast. This Gracilaria tenuistipitata var. liui (Red alga) protein is Large ribosomal subunit protein bL34c.